The following is a 777-amino-acid chain: Cyclin-F (777 aa).

A Nuclear localization signal 1 motif is present at residues 20-28; it reads KRRIKRRPR. Positions 29–76 constitute an F-box domain; sequence NLTILSLPEDVLFHILKWLSVGDILAVRAVHSHLKYLVDNHASVWASA. The 118-residue stretch at 288–405 folds into the Cyclin N-terminal domain; the sequence is QASQAVNKQQ…EIISALEGKI (118 aa). 3 short sequence motifs (d box) span residues 310–313, 343–346, and 349–352; these read RYIL, RRRL, and RYKL. Disordered stretches follow at residues 544-591 and 651-777; these read QESP…TPTA and QESS…HLAS. A Nuclear localization signal 2 motif is present at residues 568-574; the sequence is RRSKRKR. Positions 582 to 761 are PEST; sequence RGSFVTTPTA…ESGVHQQPVK (180 aa). 2 stretches are compositionally biased toward low complexity: residues 695–708 and 719–731; these read SGYS…PISS and STSV…HSST. Positions 751-767 are enriched in polar residues; sequence PESGVHQQPVKRQNLSV. The D box 4 signature appears at 762–765; the sequence is RQNL. Residues 768 to 777 are compositionally biased toward basic and acidic residues; the sequence is HSDKDMHLAS.

It belongs to the cyclin family. Cyclin AB subfamily. Component of the SCF(CCNF) complex consisting of CUL1, RBX1, SKP1 and CCNF. Interacts with SKP1. Interacts with CUL1. Interacts with CCNB1; interaction is required for nuclear localization of CCNB1. Interacts with CCP110; this interaction leads to CCP110 ubiquitination and degradation via the proteasome pathway. Interacts (via the Cyclin N-terminal domain) with MYBL2/BMYB. Interacts with FZR1/CDH1 (via N-terminus). Interacts with RRM2 (via Cy motif and when phosphorylated at 'Thr-33'); the interaction occurs exclusively in G2 and early M. Interacts with CDC6 (via Cy motif); the interaction takes place during G2 and M phase. Degraded when the spindle assembly checkpoint is activated during the G2-M transition. Degradation is not dependent on the proteasome or ubiquitin and depends on the C-terminal PEST sequence. Post-translationally, phosphorylated just before cells enter into mitosis. In terms of processing, ubiquitinated by the anaphase-promoting complex (APC/C); leading to its degradation by the proteasome.

The protein resides in the nucleus. It is found in the cytoplasm. Its subcellular location is the perinuclear region. The protein localises to the cytoskeleton. It localises to the microtubule organizing center. The protein resides in the centrosome. It is found in the centriole. Substrate recognition component of a SCF (SKP1-CUL1-F-box protein) E3 ubiquitin-protein ligase complex which mediates the ubiquitination and subsequent proteasomal degradation of target proteins. The SCF(CCNF) E3 ubiquitin-protein ligase complex is an integral component of the ubiquitin proteasome system (UPS) and links proteasome degradation to the cell cycle. Mediates the substrate recognition and the proteasomal degradation of various target proteins involved in the regulation of cell cycle progression and in the maintenance of genome stability. Mediates the ubiquitination and subsequent proteasomal degradation of CP110 during G2 phase, thereby acting as an inhibitor of centrosome reduplication. In G2, mediates the ubiquitination and proteasomal degradation of CDC6, thereby suppressing DNA re-replication and preventing genome instability. Involved in the ubiquitination and degradation of the substrate adapter CDH1 of the anaphase-promoting complex (APC/C), thereby acting as an antagonist of APC/C in regulating G1 progression and S phase entry. May play a role in the G2 cell cycle checkpoint control after DNA damage, possibly by promoting the ubiquitination of MYBL2/BMYB. The chain is Cyclin-F (Ccnf) from Mus musculus (Mouse).